The chain runs to 312 residues: Malate dehydrogenase (312 aa).

NAD(+) is bound by residues 7–13 (GAAGGIG) and aspartate 34. Substrate-binding residues include arginine 81 and arginine 87. Residues asparagine 94 and 117–119 (ITN) contribute to the NAD(+) site. Substrate is bound by residues asparagine 119 and arginine 153. The active-site Proton acceptor is histidine 177. Methionine 227 serves as a coordination point for NAD(+).

This sequence belongs to the LDH/MDH superfamily. MDH type 1 family. As to quaternary structure, homodimer.

It catalyses the reaction (S)-malate + NAD(+) = oxaloacetate + NADH + H(+). Functionally, catalyzes the reversible oxidation of malate to oxaloacetate. This Salmonella gallinarum (strain 287/91 / NCTC 13346) protein is Malate dehydrogenase.